The primary structure comprises 197 residues: uncharacterized protein (197 aa).

A run of 6 helical transmembrane segments spans residues 5-23, 27-46, 55-77, 87-109, 116-138, and 153-174; these read LNLL…GLRF, ISFA…MLRF, VIAG…LAYT, LSLL…VIRI, VFAF…LPTG, and FVEF…CLVF.

The protein resides in the cell membrane. This is an uncharacterized protein from Archaeoglobus fulgidus (strain ATCC 49558 / DSM 4304 / JCM 9628 / NBRC 100126 / VC-16).